A 557-amino-acid chain; its full sequence is 2-succinyl-5-enolpyruvyl-6-hydroxy-3-cyclohexene-1-carboxylate synthase (557 aa).

This sequence belongs to the TPP enzyme family. MenD subfamily. Homodimer. It depends on Mg(2+) as a cofactor. Mn(2+) is required as a cofactor. Requires thiamine diphosphate as cofactor.

It carries out the reaction isochorismate + 2-oxoglutarate + H(+) = 5-enolpyruvoyl-6-hydroxy-2-succinyl-cyclohex-3-ene-1-carboxylate + CO2. The protein operates within quinol/quinone metabolism; 1,4-dihydroxy-2-naphthoate biosynthesis; 1,4-dihydroxy-2-naphthoate from chorismate: step 2/7. It participates in quinol/quinone metabolism; menaquinone biosynthesis. In terms of biological role, catalyzes the thiamine diphosphate-dependent decarboxylation of 2-oxoglutarate and the subsequent addition of the resulting succinic semialdehyde-thiamine pyrophosphate anion to isochorismate to yield 2-succinyl-5-enolpyruvyl-6-hydroxy-3-cyclohexene-1-carboxylate (SEPHCHC). In Staphylococcus aureus (strain MSSA476), this protein is 2-succinyl-5-enolpyruvyl-6-hydroxy-3-cyclohexene-1-carboxylate synthase.